The sequence spans 884 residues: Protein translocase subunit SecA (884 aa).

Residues Gln88, 106–110, and Asp509 contribute to the ATP site; that span reads GEGKT. The disordered stretch occupies residues 822–884; that stretch reads EQKKLKMSGA…PKKGLFANND (63 aa). Residues 833–842 are compositionally biased toward basic and acidic residues; sequence KGGEDLEETK. 4 residues coordinate Zn(2+): Cys858, Cys860, Cys869, and His870.

This sequence belongs to the SecA family. Monomer and homodimer. Part of the essential Sec protein translocation apparatus which comprises SecA, SecYEG and auxiliary proteins SecDF-YajC and YidC. Zn(2+) serves as cofactor.

Its subcellular location is the cell inner membrane. It is found in the cytoplasm. It catalyses the reaction ATP + H2O + cellular proteinSide 1 = ADP + phosphate + cellular proteinSide 2.. Part of the Sec protein translocase complex. Interacts with the SecYEG preprotein conducting channel. Has a central role in coupling the hydrolysis of ATP to the transfer of proteins into and across the cell membrane, serving as an ATP-driven molecular motor driving the stepwise translocation of polypeptide chains across the membrane. The polypeptide is Protein translocase subunit SecA (Campylobacter hominis (strain ATCC BAA-381 / DSM 21671 / CCUG 45161 / LMG 19568 / NCTC 13146 / CH001A)).